We begin with the raw amino-acid sequence, 508 residues long: Dihydroniloticin synthase CYP71CD4 (508 aa).

A helical membrane pass occupies residues 6–26 (LDFFSVTSFIIFFLFLFRLVW). A heme-binding site is contributed by Cys449.

Belongs to the cytochrome P450 family. Heme serves as cofactor. Mainly expressed in roots and, to a lesser extent, in stems.

The protein resides in the membrane. It catalyses the reaction tirucalla-7,24-dien-3beta-ol + 2 reduced [NADPH--hemoprotein reductase] + 2 O2 = dihydroniloticin + 2 oxidized [NADPH--hemoprotein reductase] + 2 H2O + 2 H(+). Its pathway is secondary metabolite biosynthesis; terpenoid biosynthesis. Monooxygenase involved in the biosynthesis of quassinoids triterpene natural products such as ailanthone, chaparrinone, glaucarubinone and amarolide, allelopathic degraded triterpene lactones inhibiting the growth of other plants, and possessing antimalarial, antifeedant, insecticidal, anti-inflammatory and anticancer activities. Catalyzes the conversion of tirucalladienol to dihydroniloticin. The polypeptide is Dihydroniloticin synthase CYP71CD4 (Ailanthus altissima (Tree-of-heaven)).